Here is a 552-residue protein sequence, read N- to C-terminus: MPKEKYEPPDPRRMYTIMSSEEAANGKKSHWAELEISGKVRSLSSSLWSLTHLTALHLSDNSLSCIPSDIAKLHNLVYLDLSHNQIQSLPAELGNMVSLRELHLNYNQLRVLPFELGKLFQLQTLSLKGNPLTQDILNLCLEPDGTRRLLNYLLDNLSVSTEQPPPRSWIMLQEPDRTRPTALFSVMCYNVLCDKYATRQLYGYCPSWALNWDYRKKAIIQEILSCNADIISLQEVETEQYYSFFLVELKERGYNGFFSPKSRARTMSEQERKHVDGCAIFFKTEKFTLVQKHTVEFNQLAMANSEGSEAMLNRVMTKDNIGVAVLLELRKELIEMSSGKPHLGTEKQLILVANAHMHWDPEYSDVKLVQTMMFLSEVKNIIDKASRSLKSSVLGECGTIPLVLCADLNSLPDSGVVEYLSTGGVETNHKDFKELRYNESLTNFSCNGKNGMTNGRITHGFKLKSAYENGLMPYTNYTFDFKGIIDYIFYSKPQLNTLAILGPLDHHWLVENNISGCPHPLIPSDHFSLFAQLELLLPFLPQVNGIHLPGRR.

LRR repeat units follow at residues 52-73 (HLTA…IAKL), 75-96 (NLVY…LGNM), 98-120 (SLRE…GKLF), and 121-143 (QLQT…CLEP). The tract at residues 153 to 552 (LLDNLSVSTE…VNGIHLPGRR (400 aa)) is nuclease domain. E235 lines the Mg(2+) pocket. Substrate-binding residues include E235, E271, H356, and P361. D407 contributes to the Mg(2+) binding site. D407 (proton donor/acceptor) is an active-site residue. The substrate site is built by N409, N476, and F481.

The protein belongs to the CCR4/nocturin family. Subunit of the CCR4-NOT core complex. Mg(2+) is required as a cofactor.

The protein localises to the cytoplasm. Its subcellular location is the nucleus. The catalysed reaction is Exonucleolytic cleavage of poly(A) to 5'-AMP.. In terms of biological role, poly(A) nuclease involved in mRNA decay. Has 3'-5' RNase activity. The CCR4-NOT complex functions as a general transcription regulation complex. Enhances ligand-dependent transcriptional activity of nuclear hormone receptors. The chain is CCR4-NOT transcription complex subunit 6 (cnot6) from Xenopus laevis (African clawed frog).